Here is a 255-residue protein sequence, read N- to C-terminus: Pimeloyl-[acyl-carrier protein] methyl ester esterase (255 aa).

Residues 16–241 form the AB hydrolase-1 domain; the sequence is LVLLHGWGMN…QSSHAPFMTE (226 aa). Substrate is bound by residues W22, 82–83, and 143–147; these read SL and FMALQ. S82 (nucleophile) is an active-site residue. Catalysis depends on residues D207 and H235. Substrate is bound at residue H235.

Belongs to the AB hydrolase superfamily. Carboxylesterase BioH family. As to quaternary structure, monomer.

It is found in the cytoplasm. It catalyses the reaction 6-carboxyhexanoyl-[ACP] methyl ester + H2O = 6-carboxyhexanoyl-[ACP] + methanol + H(+). Its pathway is cofactor biosynthesis; biotin biosynthesis. Its function is as follows. The physiological role of BioH is to remove the methyl group introduced by BioC when the pimeloyl moiety is complete. It allows to synthesize pimeloyl-ACP via the fatty acid synthetic pathway through the hydrolysis of the ester bonds of pimeloyl-ACP esters. The sequence is that of Pimeloyl-[acyl-carrier protein] methyl ester esterase from Vibrio parahaemolyticus serotype O3:K6 (strain RIMD 2210633).